Reading from the N-terminus, the 243-residue chain is Protein IN2-1 (243 aa).

Positions 1–26 (MAAAAGPSSSVKESLPPALGSTSQPP) are disordered. Residues 31–112 (GTTRLYICYF…YIDSNFDGPA (82 aa)) form the GST N-terminal domain. Residues Lys-70, Val-84, and 96–97 (ES) contribute to the glutathione site. The GST C-terminal domain maps to 109–240 (DGPALLPEDA…FLLDLAKSHL (132 aa)).

It belongs to the GST superfamily. HSP26 family. In terms of tissue distribution, leaves and roots. It is more strongly induced in the leaves relative to the roots.

In Zea mays (Maize), this protein is Protein IN2-1 (IN2-1).